A 403-amino-acid polypeptide reads, in one-letter code: Octaketide synthase 1 (403 aa).

C174 is a catalytic residue. CoA contacts are provided by residues S281 and 318–321 (GGRA).

This sequence belongs to the thiolase-like superfamily. Chalcone/stilbene synthases family. Homodimer.

It participates in secondary metabolite biosynthesis; flavonoid biosynthesis. Catalyzes the iterative condensations of 8 molecules of malonyl-CoA to produce aromatic octaketides, SEK4 and SEK4b, the products of the minimal polyketide synthase for the benzoisochromanequinone actinorhodin. May be involved in the biosynthesis of the octaketide barbaloin. In Aloe arborescens (Kidachi aloe), this protein is Octaketide synthase 1.